The following is a 252-amino-acid chain: Isoprenyl transferase (252 aa).

The active site involves aspartate 32. Position 32 (aspartate 32) interacts with Mg(2+). Substrate contacts are provided by residues 33-36 (GNGR), tryptophan 37, arginine 45, histidine 49, and 77-79 (STE). Catalysis depends on asparagine 80, which acts as the Proton acceptor. Substrate-binding positions include tryptophan 81, arginine 83, arginine 200, and 206 to 208 (RLS). Mg(2+) is bound at residue glutamate 219.

This sequence belongs to the UPP synthase family. In terms of assembly, homodimer. The cofactor is Mg(2+).

Catalyzes the condensation of isopentenyl diphosphate (IPP) with allylic pyrophosphates generating different type of terpenoids. This is Isoprenyl transferase from Listeria monocytogenes serovar 1/2a (strain ATCC BAA-679 / EGD-e).